We begin with the raw amino-acid sequence, 30 residues long: Cyclotide psyleio E (30 aa).

Positions 1-30 (SVTPIVCGETCFGGTCNTPGCSCSWPICTK) form a cross-link, cyclopeptide (Ser-Lys). Disulfide bonds link C7–C21, C11–C23, and C16–C28.

Post-translationally, this is a cyclic peptide.

Probably participates in a plant defense mechanism. The chain is Cyclotide psyleio E from Psychotria leiocarpa.